A 181-amino-acid polypeptide reads, in one-letter code: Germinal center-associated signaling and motility protein (181 aa).

Ser102 carries the phosphoserine modification. Residues 117 to 128 show a composition bias toward basic and acidic residues; the sequence is AERHKESSRGTE. The interval 117-181 is disordered; it reads AERHKESSRG…PYETHFSYPQ (65 aa). Tyr150 carries the phosphotyrosine modification.

Interacts with ACTB and MYH2; the interaction with MYH2 is increased by IL6-induced phosphorylation. Interacts (via C-terminus) with ARHGEF11 (via DH domain). Interacts with ARHGEF12. Interacts with SYK; the interaction increases after B-cell receptor stimulation, resulting in enhanced SYK autophosphorylation and activity. In terms of processing, phosphorylation on tyrosine residues can be induced by IL6. Phosphorylation is mediated by LYN. Targeted by the ubiquitin E3 ligase subunit FBXO10 to mediate its ubiquitination and degradation. As to expression, highly expressed in normal germinal center (GC) B-cells. Expressed in spleen and, to a lesser extent, bone marrow.

It is found in the cytoplasm. Its subcellular location is the cell membrane. In terms of biological role, involved in the negative regulation of lymphocyte motility. It mediates the migration-inhibitory effects of IL6. Serves as a positive regulator of the RhoA signaling pathway. Enhancement of RhoA activation results in inhibition of lymphocyte and lymphoma cell motility by activation of its downstream effector ROCK. Is a regulator of B-cell receptor signaling, that acts through SYK kinase activation. The polypeptide is Germinal center-associated signaling and motility protein (Gcsam) (Mus musculus (Mouse)).